A 584-amino-acid polypeptide reads, in one-letter code: 2-succinyl-5-enolpyruvyl-6-hydroxy-3-cyclohexene-1-carboxylate synthase (584 aa).

Belongs to the TPP enzyme family. MenD subfamily. Homodimer. Mg(2+) serves as cofactor. Requires Mn(2+) as cofactor. The cofactor is thiamine diphosphate.

The catalysed reaction is isochorismate + 2-oxoglutarate + H(+) = 5-enolpyruvoyl-6-hydroxy-2-succinyl-cyclohex-3-ene-1-carboxylate + CO2. The protein operates within quinol/quinone metabolism; 1,4-dihydroxy-2-naphthoate biosynthesis; 1,4-dihydroxy-2-naphthoate from chorismate: step 2/7. It participates in quinol/quinone metabolism; menaquinone biosynthesis. Catalyzes the thiamine diphosphate-dependent decarboxylation of 2-oxoglutarate and the subsequent addition of the resulting succinic semialdehyde-thiamine pyrophosphate anion to isochorismate to yield 2-succinyl-5-enolpyruvyl-6-hydroxy-3-cyclohexene-1-carboxylate (SEPHCHC). The sequence is that of 2-succinyl-5-enolpyruvyl-6-hydroxy-3-cyclohexene-1-carboxylate synthase from Bacillus cereus (strain ZK / E33L).